The sequence spans 444 residues: Coagulation factor VII (444 aa).

The first 21 residues, 1-21 (MAPQARGLGLCSLLALQASLA), serve as a signal peptide directing secretion. Residues 22-39 (AVFITQEEAHSVLRRQRR) constitute a propeptide that is removed on maturation. The 45-residue stretch at 40-84 (ANSFLEELRPGSLERECKEELCSFEEAREVFQSTERTKQFWITYN) folds into the Gla domain. 4-carboxyglutamate is present on residues glutamate 45, glutamate 46, glutamate 53, glutamate 55, glutamate 58, glutamate 59, glutamate 64, glutamate 65, glutamate 68, and glutamate 74. Cysteines 56 and 61 form a disulfide. An EGF-like 1; calcium-binding domain is found at 85-121 (DGDQCASNPCQNGGSCEDQIQSYICFCLADFEGRNCE). Intrachain disulfides connect cysteine 89–cysteine 100, cysteine 94–cysteine 109, cysteine 111–cysteine 120, cysteine 130–cysteine 141, cysteine 137–cysteine 151, cysteine 153–cysteine 166, cysteine 174–cysteine 301, cysteine 198–cysteine 203, and cysteine 217–cysteine 233. Serine 91 is a glycosylation site (O-linked (Glc...) serine; alternate). An O-linked (Xyl...) serine; alternate glycan is attached at serine 91. A glycan (O-linked (Fuc) serine) is linked at serine 99. Aspartate 102 is subject to (3R)-3-hydroxyaspartate. The EGF-like 2 domain occupies 126 to 167 (DQLICMYENGGCEQYCSDHVGSQRSCRCHEGYTLLPNGVSCT). Residues 192–431 (IVGGKVCPKG…YTEWLSRLMR (240 aa)) form the Peptidase S1 domain. Residue asparagine 211 is glycosylated (N-linked (GlcNAc...) asparagine). The active-site Charge relay system is histidine 232. Asparagine 242 carries an N-linked (GlcNAc...) asparagine glycan. The active-site Charge relay system is aspartate 281. Asparagine 306 carries N-linked (GlcNAc...) asparagine glycosylation. Cysteine 349 and cysteine 368 are disulfide-bonded. Aspartate 377 contacts substrate. The cysteines at positions 379 and 407 are disulfide-linked. Serine 383 serves as the catalytic Charge relay system.

This sequence belongs to the peptidase S1 family. In terms of assembly, heterodimer of a light chain and a heavy chain linked by a disulfide bond. The vitamin K-dependent, enzymatic carboxylation of some glutamate residues allows the modified protein to bind calcium. In terms of processing, the iron and 2-oxoglutarate dependent 3-hydroxylation of aspartate and asparagine is (R) stereospecific within EGF domains. Post-translationally, O-glycosylated. O-fucosylated by POFUT1 on a conserved serine or threonine residue found in the consensus sequence C2-X(4,5)-[S/T]-C3 of EGF domains, where C2 and C3 are the second and third conserved cysteines. Can be either O-glucosylated or O-xylosylated at Ser-91 by POGLUT1. As to expression, plasma.

The protein resides in the secreted. It carries out the reaction Selective cleavage of Arg-|-Ile bond in factor X to form factor Xa.. Initiates the extrinsic pathway of blood coagulation. Serine protease that circulates in the blood in a zymogen form. Factor VII is converted to factor VIIa by factor Xa, factor XIIa, factor IXa, or thrombin by minor proteolysis. In the presence of tissue factor and calcium ions, factor VIIa then converts factor X to factor Xa by limited proteolysis. Factor VIIa also converts factor IX to factor IXa in the presence of tissue factor and calcium. The chain is Coagulation factor VII (F7) from Oryctolagus cuniculus (Rabbit).